A 449-amino-acid polypeptide reads, in one-letter code: Phosphoglucosamine mutase (449 aa).

S100 acts as the Phosphoserine intermediate in catalysis. S100, D241, D243, and D245 together coordinate Mg(2+). The residue at position 100 (S100) is a Phosphoserine.

It belongs to the phosphohexose mutase family. Mg(2+) is required as a cofactor. In terms of processing, activated by phosphorylation.

It carries out the reaction alpha-D-glucosamine 1-phosphate = D-glucosamine 6-phosphate. In terms of biological role, catalyzes the conversion of glucosamine-6-phosphate to glucosamine-1-phosphate. The chain is Phosphoglucosamine mutase from Caldicellulosiruptor saccharolyticus (strain ATCC 43494 / DSM 8903 / Tp8T 6331).